The primary structure comprises 390 residues: Phosphopentomutase (390 aa).

6 residues coordinate Mn(2+): D11, D283, H288, D324, H325, and H336.

The protein belongs to the phosphopentomutase family. The cofactor is Mn(2+).

It localises to the cytoplasm. The enzyme catalyses 2-deoxy-alpha-D-ribose 1-phosphate = 2-deoxy-D-ribose 5-phosphate. The catalysed reaction is alpha-D-ribose 1-phosphate = D-ribose 5-phosphate. It functions in the pathway carbohydrate degradation; 2-deoxy-D-ribose 1-phosphate degradation; D-glyceraldehyde 3-phosphate and acetaldehyde from 2-deoxy-alpha-D-ribose 1-phosphate: step 1/2. In terms of biological role, isomerase that catalyzes the conversion of deoxy-ribose 1-phosphate (dRib-1-P) and ribose 1-phosphate (Rib-1-P) to deoxy-ribose 5-phosphate (dRib-5-P) and ribose 5-phosphate (Rib-5-P), respectively. The protein is Phosphopentomutase of Clostridium novyi (strain NT).